We begin with the raw amino-acid sequence, 379 residues long: MAKRDYYEVLGISKDASKDEIKKAYRKLSKKYHPDINKEEGADEKFKEISEAYEVLSDDNKRASYDQFGHDGPQGFGGQGFNGSDFGGFSGFGGGGFEDIFSSFFGGGRQRDPNASQKGDDLQYTMTLTFEEAVFGTTKEISIRKDVTCETCHGDGAKPGTSKKTCSYCNGAGHVAVEQNTILGRVRTEQVCPKCNGSGQEFEEACPTCHGKGTENKTVKLEVKVPEGVDNEQQIRLAGEGSPGVNGGPAGDLYVVFRVKPSETFKRDGDDIYYKLNVSFPQAALGDEIKIPTLNNEVMLTIPAGTQTGKQFRLKEKGIKNVHGYGYGDLYVDIKVVTPTKLTDRQKELMKEFAQLNGEEINEQPSNFKDRAKRFFKGE.

The J domain maps to aspartate 5 to glycine 69. The CR-type zinc finger occupies glycine 136 to threonine 218. Residues cysteine 149, cysteine 152, cysteine 166, cysteine 169, cysteine 192, cysteine 195, cysteine 206, and cysteine 209 each coordinate Zn(2+). CXXCXGXG motif repeat units lie at residues cysteine 149–glycine 156, cysteine 166–glycine 173, cysteine 192–glycine 199, and cysteine 206–glycine 213.

This sequence belongs to the DnaJ family. Homodimer. Zn(2+) is required as a cofactor.

The protein localises to the cytoplasm. Participates actively in the response to hyperosmotic and heat shock by preventing the aggregation of stress-denatured proteins and by disaggregating proteins, also in an autonomous, DnaK-independent fashion. Unfolded proteins bind initially to DnaJ; upon interaction with the DnaJ-bound protein, DnaK hydrolyzes its bound ATP, resulting in the formation of a stable complex. GrpE releases ADP from DnaK; ATP binding to DnaK triggers the release of the substrate protein, thus completing the reaction cycle. Several rounds of ATP-dependent interactions between DnaJ, DnaK and GrpE are required for fully efficient folding. Also involved, together with DnaK and GrpE, in the DNA replication of plasmids through activation of initiation proteins. This chain is Chaperone protein DnaJ, found in Staphylococcus aureus (strain bovine RF122 / ET3-1).